We begin with the raw amino-acid sequence, 295 residues long: Protease HtpX (295 aa).

The next 2 helical transmembrane spans lie at 4-24 (ILLFLATNLAVVLIASITLSL) and 42-62 (QLLVFCAVFGFAGSLFSLFIS). H147 is a Zn(2+) binding site. Residue E148 is part of the active site. Residue H151 coordinates Zn(2+). The next 2 membrane-spanning stretches (helical) occupy residues 158–178 (VTLALVQGVVNTFVMFFARII) and 199–219 (ITTIFAELVLGFLASAIVMWF). E224 serves as a coordination point for Zn(2+).

The protein belongs to the peptidase M48B family. It depends on Zn(2+) as a cofactor.

The protein localises to the cell inner membrane. In Pseudomonas savastanoi pv. phaseolicola (strain 1448A / Race 6) (Pseudomonas syringae pv. phaseolicola (strain 1448A / Race 6)), this protein is Protease HtpX.